The primary structure comprises 142 residues: Transcriptional regulator MraZ (142 aa).

SpoVT-AbrB domains lie at 5–51 (ASAL…PRPE) and 77–120 (AADV…DAAT).

Belongs to the MraZ family. As to quaternary structure, forms oligomers.

Its subcellular location is the cytoplasm. The protein localises to the nucleoid. The chain is Transcriptional regulator MraZ from Ralstonia nicotianae (strain ATCC BAA-1114 / GMI1000) (Ralstonia solanacearum).